The chain runs to 290 residues: Glycine-N-acyltransferase-like protein 3 (290 aa).

The enzyme catalyses an acyl-CoA + glycine = an N-acylglycine + CoA + H(+). It catalyses the reaction (9Z)-octadecenoyl-CoA + glycine = N-(9Z-octadecenoyl)glycine + CoA + H(+). It carries out the reaction hexadecanoyl-CoA + glycine = N-hexadecanoylglycine + CoA + H(+). Its pathway is lipid metabolism. In terms of biological role, catalyzes the conjugation of long-chain fatty acyl-CoA thioester and glycine to produce long-chain N-(fatty acyl)glycine, an intermediate in the primary fatty acid amide biosynthetic pathway. In Mus musculus (Mouse), this protein is Glycine-N-acyltransferase-like protein 3.